Consider the following 82-residue polypeptide: MVTIRLARHGAKKRPFYQVVVTDSRNARNGRFIERVGFFNPIASGAEEETRLDLDRIAHWVGLGATVSDRVAALIKAANKAA.

Belongs to the bacterial ribosomal protein bS16 family.

This chain is Small ribosomal subunit protein bS16, found in Klebsiella pneumoniae (strain 342).